A 246-amino-acid polypeptide reads, in one-letter code: UL16-binding protein 6 (246 aa).

A signal peptide spans M1 to A25. The segment at D29–E117 is MHC class I alpha-1 like. A disulfide bond links C50 and C66. N68 and N82 each carry an N-linked (GlcNAc...) asparagine glycan. The MHC class I alpha-2 like stretch occupies residues P118–G210. An intrachain disulfide couples C127 to C190. G218 carries GPI-anchor amidated glycine lipidation. The propeptide at T219–I246 is removed in mature form.

The protein belongs to the MHC class I family. Interacts with KLRK1/NKG2D. As to quaternary structure, (Microbial infection) In CMV-infected cells, interacts with the viral glycoprotein UL16; this interaction causes relocalization from the cell surface to the cytoplasm and prevents binding to and activation of KLRK1/NKG2D, providing CMV with an immune evasion mechanism. As to expression, widely expressed. Expressed in trachea. Constitutively expressed in peripheral blood mononuclear cells, including B-cells and natural killer cells, as well as CD4+ and CD8+ T-cells and monocytes. Tends to be up-regulated in various lymphoid malignancies, including chronic lymphocytic leukemia.

It localises to the cell membrane. It is found in the endoplasmic reticulum. Functionally, binds and activates the KLRK1/NKG2D receptor, mediating natural killer cell cytotoxicity. The sequence is that of UL16-binding protein 6 (RAET1L) from Homo sapiens (Human).